Here is a 793-residue protein sequence, read N- to C-terminus: Probable phosphoketolase (793 aa).

Belongs to the XFP family. Requires thiamine diphosphate as cofactor.

In Rhodopirellula baltica (strain DSM 10527 / NCIMB 13988 / SH1), this protein is Probable phosphoketolase.